The sequence spans 144 residues: Large ribosomal subunit protein uL11 (144 aa).

The protein belongs to the universal ribosomal protein uL11 family. As to quaternary structure, part of the ribosomal stalk of the 50S ribosomal subunit. Interacts with L10 and the large rRNA to form the base of the stalk. L10 forms an elongated spine to which L12 dimers bind in a sequential fashion forming a multimeric L10(L12)X complex. One or more lysine residues are methylated.

Functionally, forms part of the ribosomal stalk which helps the ribosome interact with GTP-bound translation factors. In Rickettsia bellii (strain OSU 85-389), this protein is Large ribosomal subunit protein uL11.